A 273-amino-acid polypeptide reads, in one-letter code: 3-methyl-2-oxobutanoate hydroxymethyltransferase 3 (273 aa).

Positions 49 and 88 each coordinate Mg(2+). Residues 49–50 (DS), D88, and K118 contribute to the 3-methyl-2-oxobutanoate site. E120 lines the Mg(2+) pocket. E187 acts as the Proton acceptor in catalysis.

Belongs to the PanB family. Homodecamer; pentamer of dimers. Mg(2+) serves as cofactor.

The protein localises to the cytoplasm. It catalyses the reaction 3-methyl-2-oxobutanoate + (6R)-5,10-methylene-5,6,7,8-tetrahydrofolate + H2O = 2-dehydropantoate + (6S)-5,6,7,8-tetrahydrofolate. It functions in the pathway cofactor biosynthesis; (R)-pantothenate biosynthesis; (R)-pantoate from 3-methyl-2-oxobutanoate: step 1/2. Catalyzes the reversible reaction in which hydroxymethyl group from 5,10-methylenetetrahydrofolate is transferred onto alpha-ketoisovalerate to form ketopantoate. This is 3-methyl-2-oxobutanoate hydroxymethyltransferase 3 from Bradyrhizobium diazoefficiens (strain JCM 10833 / BCRC 13528 / IAM 13628 / NBRC 14792 / USDA 110).